The chain runs to 88 residues: Large ribosomal subunit protein bL27 (88 aa).

The segment at 1–20 (MASKKGVGSTKDGRDSIAKR) is disordered.

Belongs to the bacterial ribosomal protein bL27 family.

This is Large ribosomal subunit protein bL27 (rpmA) from Geobacillus stearothermophilus (Bacillus stearothermophilus).